The chain runs to 318 residues: MFTAVAPPQETLPRDLVGAIQSLKKELNAVILAHYYQEAAIQDIADYLGDSLGLSQQAASTDADVIVFAGVHFMAETAKILNPHKLVLLPDLEAGCSLADSCPPREFAEFKQRHPDHLVISYINCTAEIKALSDIICTSSNAVKIVQQLPPDQKIIFAPDRNLGRYVMEQTGREMVLWQGSCIVHETFSERRLLELKTQYPQAEIIAHPECEKAILRHADFIGSTTALLNYSGKSQGKEFIVGTEPGIIHQMEKLSPSKQFIPLPNNSNCDCNECPYMRLNTLEKLYWAMQRRSPEITLPEATMAAALKPIQRMLAMS.

His-34 and Ser-51 together coordinate iminosuccinate. Cys-96 is a [4Fe-4S] cluster binding site. Residues 122-124 (YIN) and Ser-139 each bind iminosuccinate. Cys-182 is a [4Fe-4S] cluster binding site. Iminosuccinate-binding positions include 208-210 (HPE) and Thr-225. Cys-275 provides a ligand contact to [4Fe-4S] cluster.

It belongs to the quinolinate synthase family. Type 2 subfamily. Requires [4Fe-4S] cluster as cofactor.

Its subcellular location is the cytoplasm. The catalysed reaction is iminosuccinate + dihydroxyacetone phosphate = quinolinate + phosphate + 2 H2O + H(+). The protein operates within cofactor biosynthesis; NAD(+) biosynthesis; quinolinate from iminoaspartate: step 1/1. Catalyzes the condensation of iminoaspartate with dihydroxyacetone phosphate to form quinolinate. The protein is Quinolinate synthase of Synechocystis sp. (strain ATCC 27184 / PCC 6803 / Kazusa).